A 191-amino-acid chain; its full sequence is MTDSDNPLILVTGNKNKVLEVKAILGPTATLEVLDINLPEIQGSVEEITREKCRAAAETIGGPVLVEDSALEMRALGGLPGAYVKAFVETIGNEGLNRILSAFDDKSAEAVCTFGYSQGPGHEPLLFQGRLQGRIVPARGVSSFGWEPIFEVEGEGVTLAEMEVGKKNGLSHRFKALVKFREWFLGARRPV.

Position 12 to 17 (12 to 17 (TGNKNK)) interacts with ITP. Glu-40 is a Mg(2+) binding site. ITP-binding positions include Lys-52, 68-69 (DS), Lys-85, 144-147 (FGWE), Lys-167, and 172-173 (HR).

This sequence belongs to the HAM1 NTPase family. In terms of assembly, homodimer. It depends on Mg(2+) as a cofactor. The cofactor is Mn(2+).

Its subcellular location is the cytoplasm. The protein resides in the nucleus. It catalyses the reaction ITP + H2O = IMP + diphosphate + H(+). The catalysed reaction is dITP + H2O = dIMP + diphosphate + H(+). It carries out the reaction XTP + H2O = XMP + diphosphate + H(+). Pyrophosphatase that hydrolyzes non-canonical purine nucleotides such as inosine triphosphate (ITP), deoxyinosine triphosphate (dITP) or xanthosine 5'-triphosphate (XTP) to their respective monophosphate derivatives. The enzyme does not distinguish between the deoxy- and ribose forms. Probably excludes non-canonical purines from RNA and DNA precursor pools, thus preventing their incorporation into RNA and DNA and avoiding chromosomal lesions. The chain is Inosine triphosphate pyrophosphatase from Aspergillus oryzae (strain ATCC 42149 / RIB 40) (Yellow koji mold).